A 679-amino-acid chain; its full sequence is Glycine--tRNA ligase beta subunit (679 aa).

This sequence belongs to the class-II aminoacyl-tRNA synthetase family. As to quaternary structure, tetramer of two alpha and two beta subunits.

It is found in the cytoplasm. It catalyses the reaction tRNA(Gly) + glycine + ATP = glycyl-tRNA(Gly) + AMP + diphosphate. The protein is Glycine--tRNA ligase beta subunit of Streptococcus equi subsp. zooepidemicus (strain H70).